Here is a 456-residue protein sequence, read N- to C-terminus: Nuclear distribution protein PAC1 (456 aa).

Residues 9–41 form the LisH domain; sequence QADELHKSIIAYLSANDLPNTAAALRAELNLTE. A coiled-coil region spans residues 61 to 88; that stretch reads TSIVRLQKKIMDLEARNAALQSELDNLT. WD repeat units lie at residues 114–153, 156–197, 201–240, 243–282, 288–348, 350–389, 394–437, and 439–456; these read SHRD…LEMT, GHTR…KNVR, GHDH…CVRS, GHTG…NPEN, GHEH…LMTL, GHDN…KCVK, AHDR…PDVQ, and RCVI…IFAA.

This sequence belongs to the WD repeat LIS1/nudF family. As to quaternary structure, self-associates. Interacts with NDL1 and dynein.

The protein resides in the cytoplasm. The protein localises to the cytoskeleton. It is found in the spindle pole. Positively regulates the activity of the minus-end directed microtubule motor protein dynein. May enhance dynein-mediated microtubule sliding by targeting dynein to the microtubule plus end. Required for nuclear migration during vegetative growth as well as development. Required for retrograde early endosome (EE) transport from the hyphal tip. Required for localization of dynein to the mitotic spindle poles. Recruits additional proteins to the dynein complex at SPBs. The sequence is that of Nuclear distribution protein PAC1 from Ajellomyces capsulatus (strain H143) (Darling's disease fungus).